Consider the following 82-residue polypeptide: Large ribosomal subunit protein bL31B (82 aa).

Belongs to the bacterial ribosomal protein bL31 family. Type B subfamily. As to quaternary structure, part of the 50S ribosomal subunit.

This Pectobacterium carotovorum subsp. carotovorum (strain PC1) protein is Large ribosomal subunit protein bL31B.